Here is a 1763-residue protein sequence, read N- to C-terminus: Collagen alpha-2(IV) chain (1763 aa).

Positions 1 to 26 (MSSRLRIPLWLLLPTTALVYFVTTVS) are cleaved as a signal peptide. The 7S domain stretch occupies residues 27–42 (TQITCRDCTNRGCFCV). The triple-helical region stretch occupies residues 43–1529 (GEKGSMGIPG…SGPPGPPGPS (1487 aa)). Disordered stretches follow at residues 51–529 (PGPQ…PGPK) and 550–1529 (AGYA…PGPS). Over residues 72 to 81 (PGPKGQKGSQ) the composition is skewed to low complexity. The N-linked (GlcNAc...) asparagine glycan is linked to asparagine 126. Over residues 135–152 (PGLPGPPGMPGFPGPPGV) the composition is skewed to pro residues. Positions 190–199 (FPGEKGDRGD) are enriched in basic and acidic residues. Residues 206 to 217 (RGPPGEAGPPGN) are compositionally biased toward pro residues. Residues 225–235 (PKGDPGEQGPR) show a composition bias toward low complexity. Residue alanine 249 is glycosylated (O-linked (Xyl...) (glycosaminoglycan) serine). Low complexity predominate over residues 326–335 (DGLPGVPGLP). A compositionally biased stretch (gly residues) spans 400–409 (GLPGGPGLPG). 2 stretches are compositionally biased toward low complexity: residues 410–419 (LPGLEGLPGP) and 428–453 (IPGA…PGPR). The span at 466–481 (KDGRPGLDGLPGRKGE) shows a compositional bias: basic and acidic residues. The span at 564–582 (LPGIPGATGAPGDDGLPGA) shows a compositional bias: low complexity. Over residues 583–592 (PGRPGPPGPP) the composition is skewed to pro residues. 2 stretches are compositionally biased toward low complexity: residues 699–714 (DAGL…AVGP) and 731–783 (KDGL…PGIP). The span at 810–832 (PGLPGPKGEPGPSTTGPPGPPGF) shows a compositional bias: pro residues. Low complexity-rich tracts occupy residues 865–895 (EIGL…KEGP), 946–977 (FPGQ…PGQK), 1040–1051 (PGLPGQPGLRGP), 1077–1086 (LMGEKGLPGL), 1108–1146 (PGLK…QPGL), 1210–1231 (PGFP…PGPR), 1280–1296 (LPGL…PGLK), 1367–1386 (PAGL…PGFP), 1462–1480 (LPGL…FAGA), and 1499–1510 (PGLPGFPGIEGI). Residues 1511-1528 (PGPPGLPGPSGPPGPPGP) show a composition bias toward pro residues. In terms of domain architecture, Collagen IV NC1 spans 1533–1756 (GFLLVKHSQT…SRCQVCIRSP (224 aa)). Intrachain disulfides connect cysteine 1548/cysteine 1637, cysteine 1581/cysteine 1634, cysteine 1593/cysteine 1599, cysteine 1656/cysteine 1752, cysteine 1690/cysteine 1749, and cysteine 1702/cysteine 1709.

It belongs to the type IV collagen family. In terms of assembly, trimers of two alpha 1(IV) and one alpha 2(IV) chain. Type IV collagen forms a mesh-like network linked through intermolecular interactions between 7S domains and between NC1 domains. Prolines at the third position of the tripeptide repeating unit (G-X-Y) are hydroxylated in some or all of the chains. In terms of processing, type IV collagens contain numerous cysteine residues which are involved in inter- and intramolecular disulfide bonding. 12 of these, located in the NC1 domain, are conserved in all known type IV collagens. Post-translationally, the trimeric structure of the NC1 domains is stabilized by covalent bonds between Lys and Met residues.

The protein resides in the secreted. It is found in the extracellular space. It localises to the extracellular matrix. Its subcellular location is the basement membrane. Functionally, collagen type IV is specific for basement membranes. This Ascaris suum (Pig roundworm) protein is Collagen alpha-2(IV) chain.